The primary structure comprises 379 residues: Cytochrome b (379 aa).

A run of 4 helical transmembrane segments spans residues phenylalanine 33–methionine 53, tryptophan 77–isoleucine 98, tryptophan 113–leucine 133, and phenylalanine 178–leucine 198. Heme b contacts are provided by histidine 83 and histidine 97. 2 residues coordinate heme b: histidine 182 and histidine 196. Histidine 201 contacts a ubiquinone. 4 helical membrane passes run tyrosine 226–serine 246, leucine 288–histidine 308, phenylalanine 320–glycine 340, and phenylalanine 347–proline 367.

Belongs to the cytochrome b family. In terms of assembly, the cytochrome bc1 complex contains 3 respiratory subunits (MT-CYB, CYC1 and UQCRFS1), 2 core proteins (UQCRC1 and UQCRC2) and probably 6 low-molecular weight proteins. Requires heme b as cofactor.

It localises to the mitochondrion inner membrane. Functionally, component of the ubiquinol-cytochrome c reductase complex (complex III or cytochrome b-c1 complex) that is part of the mitochondrial respiratory chain. The b-c1 complex mediates electron transfer from ubiquinol to cytochrome c. Contributes to the generation of a proton gradient across the mitochondrial membrane that is then used for ATP synthesis. The polypeptide is Cytochrome b (MT-CYB) (Iguana iguana (Common iguana)).